A 128-amino-acid chain; its full sequence is NADH dehydrogenase [ubiquinone] 1 beta subcomplex subunit 6 (128 aa).

At Thr2 the chain carries N-acetylthreonine. Residue Lys24 is modified to N6-acetyllysine. Residues 68–86 (SIFVFTHILVPAWIIHYYM) form a helical membrane-spanning segment.

The protein belongs to the complex I NDUFB6 subunit family. In terms of assembly, complex I is composed of 45 different subunits.

The protein resides in the mitochondrion inner membrane. Its function is as follows. Accessory subunit of the mitochondrial membrane respiratory chain NADH dehydrogenase (Complex I), that is believed not to be involved in catalysis. Complex I functions in the transfer of electrons from NADH to the respiratory chain. The immediate electron acceptor for the enzyme is believed to be ubiquinone. This Pongo abelii (Sumatran orangutan) protein is NADH dehydrogenase [ubiquinone] 1 beta subcomplex subunit 6 (NDUFB6).